Reading from the N-terminus, the 234-residue chain is Large ribosomal subunit protein uL1 (234 aa).

This sequence belongs to the universal ribosomal protein uL1 family. As to quaternary structure, part of the 50S ribosomal subunit.

In terms of biological role, binds directly to 23S rRNA. The L1 stalk is quite mobile in the ribosome, and is involved in E site tRNA release. Its function is as follows. Protein L1 is also a translational repressor protein, it controls the translation of the L11 operon by binding to its mRNA. This is Large ribosomal subunit protein uL1 from Syntrophobacter fumaroxidans (strain DSM 10017 / MPOB).